Consider the following 98-residue polypeptide: NADH-ubiquinone oxidoreductase chain 4L (98 aa).

The next 3 membrane-spanning stretches (helical) occupy residues 1 to 21, 29 to 49, and 59 to 79; these read MLSINLNLIVAFLLALMGVLI, TLLCLEGMMLSLFILMTLLIT, and TPLILLVFSACEAAIGLALLV.

The protein belongs to the complex I subunit 4L family. As to quaternary structure, core subunit of respiratory chain NADH dehydrogenase (Complex I) which is composed of 45 different subunits.

It is found in the mitochondrion inner membrane. The enzyme catalyses a ubiquinone + NADH + 5 H(+)(in) = a ubiquinol + NAD(+) + 4 H(+)(out). In terms of biological role, core subunit of the mitochondrial membrane respiratory chain NADH dehydrogenase (Complex I) which catalyzes electron transfer from NADH through the respiratory chain, using ubiquinone as an electron acceptor. Part of the enzyme membrane arm which is embedded in the lipid bilayer and involved in proton translocation. This Sminthopsis crassicaudata (Fat-tailed dunnart) protein is NADH-ubiquinone oxidoreductase chain 4L (MT-ND4L).